The chain runs to 132 residues: Small ribosomal subunit protein uS8 (132 aa).

The protein belongs to the universal ribosomal protein uS8 family. As to quaternary structure, part of the 30S ribosomal subunit. Contacts proteins S5 and S12.

In terms of biological role, one of the primary rRNA binding proteins, it binds directly to 16S rRNA central domain where it helps coordinate assembly of the platform of the 30S subunit. The polypeptide is Small ribosomal subunit protein uS8 (Christiangramia forsetii (strain DSM 17595 / CGMCC 1.15422 / KT0803) (Gramella forsetii)).